A 500-amino-acid polypeptide reads, in one-letter code: Pentatricopeptide repeat-containing protein At1g06580 (500 aa).

PPR repeat units lie at residues 78-112 (SIVD…GISH), 113-147 (DLYS…GFEP), 148-182 (SIVT…GYEP), 183-217 (NVVI…GIRP), 218-252 (DVVT…GISP), 253-287 (DVIT…SVNP), 288-322 (NIVT…GFFP), 323-357 (NAVT…GVDG), 358-392 (DTFT…GVHP), 393-427 (DMYT…KTVV), 428-462 (GIIT…GVSP), and 463-498 (DVIT…GLMP).

It belongs to the PPR family. P subfamily.

The polypeptide is Pentatricopeptide repeat-containing protein At1g06580 (Arabidopsis thaliana (Mouse-ear cress)).